We begin with the raw amino-acid sequence, 223 residues long: Deoxyribose-phosphate aldolase (223 aa).

Asp-89 acts as the Proton donor/acceptor in catalysis. Lys-152 acts as the Schiff-base intermediate with acetaldehyde in catalysis. Residue Lys-181 is the Proton donor/acceptor of the active site.

It belongs to the DeoC/FbaB aldolase family. DeoC type 1 subfamily.

Its subcellular location is the cytoplasm. The enzyme catalyses 2-deoxy-D-ribose 5-phosphate = D-glyceraldehyde 3-phosphate + acetaldehyde. It participates in carbohydrate degradation; 2-deoxy-D-ribose 1-phosphate degradation; D-glyceraldehyde 3-phosphate and acetaldehyde from 2-deoxy-alpha-D-ribose 1-phosphate: step 2/2. Functionally, catalyzes a reversible aldol reaction between acetaldehyde and D-glyceraldehyde 3-phosphate to generate 2-deoxy-D-ribose 5-phosphate. This chain is Deoxyribose-phosphate aldolase, found in Bacillus subtilis (strain 168).